Consider the following 463-residue polypeptide: ATP synthase subunit beta (463 aa).

Residue 153–160 (GGAGVGKT) participates in ATP binding.

The protein belongs to the ATPase alpha/beta chains family. F-type ATPases have 2 components, CF(1) - the catalytic core - and CF(0) - the membrane proton channel. CF(1) has five subunits: alpha(3), beta(3), gamma(1), delta(1), epsilon(1). CF(0) has three main subunits: a(1), b(2) and c(9-12). The alpha and beta chains form an alternating ring which encloses part of the gamma chain. CF(1) is attached to CF(0) by a central stalk formed by the gamma and epsilon chains, while a peripheral stalk is formed by the delta and b chains.

It localises to the cell inner membrane. The enzyme catalyses ATP + H2O + 4 H(+)(in) = ADP + phosphate + 5 H(+)(out). Functionally, produces ATP from ADP in the presence of a proton gradient across the membrane. The catalytic sites are hosted primarily by the beta subunits. This Burkholderia cepacia (Pseudomonas cepacia) protein is ATP synthase subunit beta.